The following is a 341-amino-acid chain: Binder of USO1 and GRH1 protein 1 (341 aa).

Residues 1-181 are disordered; the sequence is MSEQESDEVK…AADDLFANDG (181 aa). Residue S2 is modified to N-acetylserine. Residues 2–41 adopt a coiled-coil conformation; that stretch reads SEQESDEVKRMKQLEEARKRVEELKKKKNKKNKGKKNKNS. A compositionally biased stretch (basic and acidic residues) spans 7–26; sequence DEVKRMKQLEEARKRVEELK. Basic residues predominate over residues 27-39; the sequence is KKKNKKNKGKKNK. Residues 69–78 are compositionally biased toward polar residues; sequence KANSTKSENN. Residues 79–91 show a composition bias toward acidic residues; that stretch reads DQNDVDEESEEKE. S87 carries the phosphoserine modification. Over residues 118–132 the composition is skewed to basic and acidic residues; that stretch reads GKDDAENTKKEEVQE. Residues 158-171 show a composition bias toward polar residues; it reads VQTQEGNEPSNTSE. S170 is modified (phosphoserine). The stretch at 188 to 272 forms a coiled coil; that stretch reads LTTIKKQKEE…LKLAEAKAAR (85 aa). The residue at position 292 (T292) is a Phosphothreonine.

Interacts with GRH1 (via C-terminus), probably forming a heterooligomer consisting of a GRH1 dimer and a BUG1 dimer.

It localises to the cytoplasm. The protein resides in the golgi apparatus. The protein localises to the cis-Golgi network membrane. Involved in ER to Golgi vesicle-mediated transport by either facilitating USO1-dependent and -independent tethering or increasing target accuracy of fusion events of COPII-coated vesicles. In Saccharomyces cerevisiae (strain ATCC 204508 / S288c) (Baker's yeast), this protein is Binder of USO1 and GRH1 protein 1.